Reading from the N-terminus, the 784-residue chain is Protein translocase subunit SecA 2 (784 aa).

Residues Gln94, 112–116 (GEGKT), and Asp501 each bind ATP.

The protein belongs to the SecA family. In terms of assembly, monomer and homodimer. Part of the essential Sec protein translocation apparatus which comprises SecA, SecYEG and auxiliary proteins SecDF. Other proteins may also be involved.

Its subcellular location is the cell membrane. It is found in the cytoplasm. The enzyme catalyses ATP + H2O + cellular proteinSide 1 = ADP + phosphate + cellular proteinSide 2.. In terms of biological role, part of the Sec protein translocase complex. Interacts with the SecYEG preprotein conducting channel. Has a central role in coupling the hydrolysis of ATP to the transfer of proteins into and across the cell membrane, serving as an ATP-driven molecular motor driving the stepwise translocation of polypeptide chains across the membrane. The protein is Protein translocase subunit SecA 2 of Mycolicibacterium smegmatis (strain ATCC 700084 / mc(2)155) (Mycobacterium smegmatis).